The chain runs to 424 residues: Calreticulin-3 (424 aa).

Positions 1-28 are cleaved as a signal peptide; sequence MGLPQNKLSFFCFFFLVSVLTLAPLAFS. N97 is a glycosylation site (N-linked (GlcNAc...) asparagine). The cysteines at positions 114 and 146 are disulfide-linked. Residues Y118, K120, Y137, and D144 each contribute to the an alpha-D-glucoside site. 7 tandem repeats follow at residues 200–211, 219–230, 236–247, 254–265, 269–279, 283–293, and 297–307. Residues 200 to 265 are 4 X approximate repeats; it reads REFGSMYTDW…KAKEPEDWDE (66 aa). Over residues 228-237 the composition is skewed to acidic residues; sequence WDDREYIDDP. The interval 228–275 is disordered; the sequence is WDDREYIDDPNDVKPEGFDSIPREIPDRKAKEPEDWDEEENGLWEPPK. The segment covering 238–260 has biased composition (basic and acidic residues); that stretch reads NDVKPEGFDSIPREIPDRKAKEP. The segment at 269 to 307 is 3 X approximate repeats; it reads GLWEPPKIPNSAYKGPWKAKRIKNPNYKGKWKNPWIDNP. E327 contributes to the an alpha-D-glucoside binding site. Positions 368-401 are enriched in basic and acidic residues; that stretch reads FAEAEKERKAREDEEARIAREEGERRRKERDHRY. Residues 368–424 are disordered; the sequence is FAEAEKERKAREDEEARIAREEGERRRKERDHRYGDRRRRYKRPNPRDYMDDYHDEL. Residues 402 to 411 are compositionally biased toward basic residues; that stretch reads GDRRRRYKRP. Over residues 412–424 the composition is skewed to basic and acidic residues; it reads NPRDYMDDYHDEL. A Prevents secretion from ER motif is present at residues 421-424; it reads HDEL.

This sequence belongs to the calreticulin family.

The protein localises to the endoplasmic reticulum lumen. Functionally, molecular calcium-binding chaperone promoting folding, oligomeric assembly and quality control in the ER via the calreticulin/calnexin cycle. This lectin may interact transiently with almost all of the monoglucosylated glycoproteins that are synthesized in the ER. Required for elongation factor Tu receptor (EFR) accumulation and for EFR, but not flagellin-sensing 2 (FLS2) signaling. This is Calreticulin-3 (CRT3) from Arabidopsis thaliana (Mouse-ear cress).